Reading from the N-terminus, the 81-residue chain is Putative membrane protein insertion efficiency factor (81 aa).

It belongs to the UPF0161 family.

It is found in the cell inner membrane. Functionally, could be involved in insertion of integral membrane proteins into the membrane. The polypeptide is Putative membrane protein insertion efficiency factor (Thermosipho melanesiensis (strain DSM 12029 / CIP 104789 / BI429)).